A 313-amino-acid polypeptide reads, in one-letter code: Ribosomal RNA small subunit methyltransferase H (313 aa).

S-adenosyl-L-methionine is bound by residues 35-37 (GGH), Asp-55, Phe-80, Asp-102, and Gln-109.

It belongs to the methyltransferase superfamily. RsmH family.

The protein resides in the cytoplasm. It carries out the reaction cytidine(1402) in 16S rRNA + S-adenosyl-L-methionine = N(4)-methylcytidine(1402) in 16S rRNA + S-adenosyl-L-homocysteine + H(+). Functionally, specifically methylates the N4 position of cytidine in position 1402 (C1402) of 16S rRNA. The polypeptide is Ribosomal RNA small subunit methyltransferase H (Shewanella frigidimarina (strain NCIMB 400)).